A 213-amino-acid polypeptide reads, in one-letter code: Putative protein Brevis radix-like 3 (213 aa).

The interval 7–27 (CSSKEGGEDGSRGAATPHGRD) is disordered. One can recognise a BRX domain in the interval 158-213 (REWTAQVEPGVQITFVTLPGGGNDLKRIRFSRERFGEDRAKVWWEHNRDRIQAQYL).

It belongs to the BRX family.

Its subcellular location is the nucleus. The chain is Putative protein Brevis radix-like 3 (BRXL3) from Oryza sativa subsp. japonica (Rice).